The following is a 323-amino-acid chain: Viral cathepsin (323 aa).

The N-terminal stretch at methionine 1–serine 16 is a signal peptide. Positions alanine 17–glycine 112 are cleaved as a propeptide — activation peptide. 3 cysteine pairs are disulfide-bonded: cysteine 133/cysteine 174, cysteine 167/cysteine 207, and cysteine 262/cysteine 310. Cysteine 136 is an active-site residue. N-linked (GlcNAc...) asparagine; by host glycosylation is present at asparagine 158. Residues histidine 269 and asparagine 289 contribute to the active site.

It belongs to the peptidase C1 family. In terms of assembly, interacts with chitinase/CHIA; this interaction maintains VCATH in the host endoplasmic reticulum. Synthesized as an inactive proenzyme and activated by proteolytic removal of the inhibitory propeptide.

The protein localises to the host endoplasmic reticulum. It carries out the reaction Endopeptidase of broad specificity, hydrolyzing substrates of both cathepsin L and cathepsin B.. In terms of biological role, cysteine protease that plays an essential role in host liquefaction to facilitate horizontal transmission of the virus. Accumulates within infected cells as an inactive proenzyme (proV-CATH), which is activated by proteolytic cleavage upon cell death. In Lepidoptera (butterflies and moths), this protein is Viral cathepsin (VCATH).